Here is a 427-residue protein sequence, read N- to C-terminus: Trigger factor (427 aa).

The region spanning 163-248 is the PPIase FKBP-type domain; the sequence is GDTVVIDFVG…IHEVKTKEVP (86 aa).

The protein belongs to the FKBP-type PPIase family. Tig subfamily.

The protein localises to the cytoplasm. The catalysed reaction is [protein]-peptidylproline (omega=180) = [protein]-peptidylproline (omega=0). Involved in protein export. Acts as a chaperone by maintaining the newly synthesized protein in an open conformation. Functions as a peptidyl-prolyl cis-trans isomerase. The protein is Trigger factor (tig) of Streptococcus pyogenes serotype M1.